Here is a 249-residue protein sequence, read N- to C-terminus: Leucyl/phenylalanyl-tRNA--protein transferase (249 aa).

Residues 1–21 (MSRTLPHLLSSDPASPFPPAE) are disordered.

This sequence belongs to the L/F-transferase family.

It localises to the cytoplasm. It carries out the reaction N-terminal L-lysyl-[protein] + L-leucyl-tRNA(Leu) = N-terminal L-leucyl-L-lysyl-[protein] + tRNA(Leu) + H(+). It catalyses the reaction N-terminal L-arginyl-[protein] + L-leucyl-tRNA(Leu) = N-terminal L-leucyl-L-arginyl-[protein] + tRNA(Leu) + H(+). The enzyme catalyses L-phenylalanyl-tRNA(Phe) + an N-terminal L-alpha-aminoacyl-[protein] = an N-terminal L-phenylalanyl-L-alpha-aminoacyl-[protein] + tRNA(Phe). Functionally, functions in the N-end rule pathway of protein degradation where it conjugates Leu, Phe and, less efficiently, Met from aminoacyl-tRNAs to the N-termini of proteins containing an N-terminal arginine or lysine. This Xanthomonas campestris pv. campestris (strain 8004) protein is Leucyl/phenylalanyl-tRNA--protein transferase.